We begin with the raw amino-acid sequence, 161 residues long: Nuclear transcription factor Y subunit B-3 (161 aa).

The disordered stretch occupies residues M1 to D23. At A2 the chain carries N-acetylalanine. Basic and acidic residues predominate over residues S8 to D23. Residues L26–S32 mediate DNA binding. The tract at residues V53 to I64 is subunit association domain (SAD). Positions E114 to G146 are disordered. Residues G128 to G146 are compositionally biased toward gly residues.

The protein belongs to the NFYB/HAP3 subunit family. As to quaternary structure, heterotrimeric transcription factor composed of three components, NF-YA, NF-YB and NF-YC. NF-YB and NF-YC must interact and dimerize for NF-YA association and DNA binding. Component of a heat stress-inducible transcriptional complex with NF-YA and NF-YB subunits made, at least, of NFYA2, NFYB3 and DPB3-1 in cooperation with DREB2A. Binds directly with DPB3-1. Ubiquitous. Expressed in seedlings, petioles, hypocotyls, reproductive organ tissues and leaves.

The protein localises to the nucleus. Its subcellular location is the cytoplasm. The protein resides in the cytosol. Functionally, component of the NF-Y/HAP transcription factor complex. The NF-Y complex stimulates the transcription of various genes by recognizing and binding to a CCAAT motif in promoters. Promotes the expression of heat stress-inducible genes by contributing to the formation of a heat stress-specific transcriptional complex with NF-Y subunits (e.g. DPB3-1, NF-YA2 and NF-YB3) and DREB2A at the promoter of target genes, thus promoting heat tolerance. The chain is Nuclear transcription factor Y subunit B-3 from Arabidopsis thaliana (Mouse-ear cress).